The sequence spans 329 residues: DNA-directed RNA polymerase subunit alpha (329 aa).

Residues 1–231 form an alpha N-terminal domain (alpha-NTD) region; sequence MQTTLLKPKT…EQLAVFAQLE (231 aa). An alpha C-terminal domain (alpha-CTD) region spans residues 249–329; the sequence is FDPILLRPVD…SWPPAGLDKR (81 aa).

This sequence belongs to the RNA polymerase alpha chain family. As to quaternary structure, homodimer. The RNAP catalytic core consists of 2 alpha, 1 beta, 1 beta' and 1 omega subunit. When a sigma factor is associated with the core the holoenzyme is formed, which can initiate transcription.

It catalyses the reaction RNA(n) + a ribonucleoside 5'-triphosphate = RNA(n+1) + diphosphate. Functionally, DNA-dependent RNA polymerase catalyzes the transcription of DNA into RNA using the four ribonucleoside triphosphates as substrates. The polypeptide is DNA-directed RNA polymerase subunit alpha (Variovorax paradoxus (strain S110)).